A 431-amino-acid chain; its full sequence is Beta-1,4-glucuronyltransferase 1 (431 aa).

Over 1-11 (MHFSKKCSVFK) the chain is Cytoplasmic. Residues 12-32 (VVLSALLIVALLQLLYLSFLS) traverse the membrane as a helical segment. The Lumenal portion of the chain corresponds to 33–431 (KLHGKQQRYK…AKYPTSPRRC (399 aa)). N-linked (GlcNAc...) asparagine glycosylation is present at Asn216. Residues Asp241 and Asp243 each contribute to the Mn(2+) site. Asn314 carries an N-linked (GlcNAc...) asparagine glycan.

This sequence belongs to the glycosyltransferase 49 family. It depends on Mn(2+) as a cofactor.

It localises to the golgi apparatus membrane. It catalyses the reaction 3-O-[beta-D-Xyl-(1-&gt;4)-Rib-ol-P-Rib-ol-P-3-beta-D-GalNAc-(1-&gt;3)-beta-D-GlcNAc-(1-&gt;4)-(O-6-P-alpha-D-Man)]-Thr-[protein] + UDP-alpha-D-glucuronate = 3-O-[beta-D-GlcA-(1-&gt;3)-beta-D-Xyl-(1-&gt;4)-Rib-ol-P-Rib-ol-P-3-beta-D-GalNAc-(1-&gt;3)-beta-D-GlcNAc-(1-&gt;4)-(O-6-P-alpha-D-Man)]-Thr-[protein] + UDP + H(+). Its pathway is protein modification; protein glycosylation. Functionally, beta-1,4-glucuronyltransferase involved in O-mannosylation of alpha-dystroglycan (DAG1). Transfers a glucuronic acid (GlcA) residue onto a xylose (Xyl) acceptor to produce the glucuronyl-beta-1,4-xylose-beta disaccharide primer, which is further elongated by LARGE, during synthesis of phosphorylated O-mannosyl glycan. Phosphorylated O-mannosyl glycan is a carbohydrate structure present in alpha-dystroglycan (DAG1), which is required for binding laminin G-like domain-containing extracellular proteins with high affinity. Required for axon guidance; via its function in O-mannosylation of alpha-dystroglycan (DAG1). The protein is Beta-1,4-glucuronyltransferase 1 of Danio rerio (Zebrafish).